Consider the following 380-residue polypeptide: 3-isopropylmalate dehydrogenase (380 aa).

Glycine 79–glutamate 90 serves as a coordination point for NAD(+). The substrate site is built by arginine 97, arginine 107, arginine 136, and aspartate 229. 3 residues coordinate Mg(2+): aspartate 229, aspartate 254, and aspartate 258. Residue glycine 294–asparagine 306 coordinates NAD(+).

This sequence belongs to the isocitrate and isopropylmalate dehydrogenases family. As to quaternary structure, homodimer. Requires Mg(2+) as cofactor. Mn(2+) serves as cofactor.

The protein resides in the cytoplasm. The enzyme catalyses (2R,3S)-3-isopropylmalate + NAD(+) = 4-methyl-2-oxopentanoate + CO2 + NADH. Its pathway is amino-acid biosynthesis; L-leucine biosynthesis; L-leucine from 3-methyl-2-oxobutanoate: step 3/4. Catalyzes the oxidation of 3-carboxy-2-hydroxy-4-methylpentanoate (3-isopropylmalate) to 3-carboxy-4-methyl-2-oxopentanoate. The product decarboxylates to 4-methyl-2 oxopentanoate. The protein is 3-isopropylmalate dehydrogenase (LEU2) of Hapsidospora chrysogena (Acremonium chrysogenum).